The following is a 293-amino-acid chain: Acetylglutamate kinase (293 aa).

Residues 70-71 (GG), Arg-92, and Asn-186 contribute to the substrate site.

This sequence belongs to the acetylglutamate kinase family. ArgB subfamily.

It localises to the cytoplasm. It carries out the reaction N-acetyl-L-glutamate + ATP = N-acetyl-L-glutamyl 5-phosphate + ADP. The protein operates within amino-acid biosynthesis; L-arginine biosynthesis; N(2)-acetyl-L-ornithine from L-glutamate: step 2/4. Its function is as follows. Catalyzes the ATP-dependent phosphorylation of N-acetyl-L-glutamate. The polypeptide is Acetylglutamate kinase (Parasynechococcus marenigrum (strain WH8102)).